The following is a 204-amino-acid chain: Imidazoleglycerol-phosphate dehydratase (204 aa).

The protein belongs to the imidazoleglycerol-phosphate dehydratase family.

The protein resides in the cytoplasm. It carries out the reaction D-erythro-1-(imidazol-4-yl)glycerol 3-phosphate = 3-(imidazol-4-yl)-2-oxopropyl phosphate + H2O. It participates in amino-acid biosynthesis; L-histidine biosynthesis; L-histidine from 5-phospho-alpha-D-ribose 1-diphosphate: step 6/9. In Rhodococcus opacus (strain B4), this protein is Imidazoleglycerol-phosphate dehydratase.